Here is a 236-residue protein sequence, read N- to C-terminus: MAIKTLGAKAAAALDQELMSTGAFSIDQLMELAGLAVSQAVYRLQPLESGRRILVACGPGNNGGDGLVAARHLRHYGYNPTVFYPKRSKNDLYQRLAKQLEDLDVPFVDDFSSAVSSTDHIVDAIFGFSFSGEVREPFPAVIQALQETKLPVTSVDAPSSWDIENGPPESGLGSSFMPTALVSLTAPKPLVNHFRGRHFIGGRFVTPAIASKYGFEVPEYKGIDQVVEVETTGQKL.

Residues 11–217 form the YjeF N-terminal domain; it reads AAALDQELMS…AIASKYGFEV (207 aa). 61-65 lines the (6S)-NADPHX pocket; the sequence is NNGGD. Asn62 and Asp123 together coordinate K(+). (6S)-NADPHX-binding positions include 127 to 133 and Asp156; that span reads GFSFSGE. Ser159 lines the K(+) pocket.

The protein belongs to the NnrE/AIBP family. Requires K(+) as cofactor.

Its subcellular location is the cytoplasm. It localises to the mitochondrion. The catalysed reaction is (6R)-NADHX = (6S)-NADHX. It carries out the reaction (6R)-NADPHX = (6S)-NADPHX. Catalyzes the epimerization of the S- and R-forms of NAD(P)HX, a damaged form of NAD(P)H that is a result of enzymatic or heat-dependent hydration. This is a prerequisite for the S-specific NAD(P)H-hydrate dehydratase to allow the repair of both epimers of NAD(P)HX. This is NAD(P)H-hydrate epimerase from Fusarium vanettenii (strain ATCC MYA-4622 / CBS 123669 / FGSC 9596 / NRRL 45880 / 77-13-4) (Fusarium solani subsp. pisi).